The primary structure comprises 484 residues: Glutamyl-tRNA(Gln) amidotransferase subunit A (484 aa).

Catalysis depends on charge relay system residues Lys-74 and Ser-149. Catalysis depends on Ser-173, which acts as the Acyl-ester intermediate.

This sequence belongs to the amidase family. GatA subfamily. As to quaternary structure, heterotrimer of A, B and C subunits.

The catalysed reaction is L-glutamyl-tRNA(Gln) + L-glutamine + ATP + H2O = L-glutaminyl-tRNA(Gln) + L-glutamate + ADP + phosphate + H(+). Functionally, allows the formation of correctly charged Gln-tRNA(Gln) through the transamidation of misacylated Glu-tRNA(Gln) in organisms which lack glutaminyl-tRNA synthetase. The reaction takes place in the presence of glutamine and ATP through an activated gamma-phospho-Glu-tRNA(Gln). This chain is Glutamyl-tRNA(Gln) amidotransferase subunit A, found in Prochlorococcus marinus subsp. pastoris (strain CCMP1986 / NIES-2087 / MED4).